We begin with the raw amino-acid sequence, 1404 residues long: DNA (cytosine-5)-methyltransferase 3 (1404 aa).

Residues 1 to 10 (MKTKAGKQKK) are compositionally biased toward basic residues. Residues 1 to 35 (MKTKAGKQKKRSVDSDDDVSRERRPKRATSGTNFK) are disordered. The segment covering 11–22 (RSVDSDDDVSRE) has biased composition (basic and acidic residues). Lys-486 participates in a covalent cross-link: Glycyl lysine isopeptide (Lys-Gly) (interchain with G-Cter in ubiquitin). 2 BAH domains span residues 614–748 (RKMD…FSLP) and 788–929 (IKYS…KKLP). The SAM-dependent MTase C5-type domain maps to 969-1402 (LATLDIFAGC…RKLKEALHLR (434 aa)). The active site involves Cys-1085.

This sequence belongs to the class I-like SAM-binding methyltransferase superfamily. C5-methyltransferase family.

It localises to the nucleus. The catalysed reaction is a 2'-deoxycytidine in DNA + S-adenosyl-L-methionine = a 5-methyl-2'-deoxycytidine in DNA + S-adenosyl-L-homocysteine + H(+). Its function is as follows. Maintains chromatin CpG methylation that plays a role in genomic imprinting, regulation of embryogenesis and seed viability. Required for proper patterns of CG DNA methylation in dividing cells. Required during the endosperm development in seeds. This chain is DNA (cytosine-5)-methyltransferase 3 (MET3), found in Arabidopsis thaliana (Mouse-ear cress).